A 245-amino-acid polypeptide reads, in one-letter code: E3 ubiquitin-protein ligase RNF138 (245 aa).

At A2 the chain carries N-acetylalanine. Residues 18–58 (CPVCQEVLKTPVRTAACQHVFCRKCFLTAMRESGIHCPLCR) form an RING-type zinc finger. 4 residues coordinate Zn(2+): C86, C89, H101, and C105. The C2HC RNF-type zinc-finger motif lies at 86-105 (CRCCAKQIKFYRMRHHYKSC). The segment at 128–153 (VGNSNRSETSASDNIETYQENTGSSG) is disordered. 2 consecutive C2H2-type zinc fingers follow at residues 157–180 (FKCP…NSNH) and 187–215 (VTCP…NQRH). A UIM domain is found at 225-243 (LQLDEETQYQTAVEESFQV).

In terms of assembly, interacts with NLK. Interacts with XRCC5/Ku80. Interacts with RBBP8/CtIP. Auto-ubiquitinated.

It is found in the chromosome. The catalysed reaction is S-ubiquitinyl-[E2 ubiquitin-conjugating enzyme]-L-cysteine + [acceptor protein]-L-lysine = [E2 ubiquitin-conjugating enzyme]-L-cysteine + N(6)-ubiquitinyl-[acceptor protein]-L-lysine.. Its pathway is protein modification; protein ubiquitination. Functionally, E3 ubiquitin-protein ligase involved in DNA damage response by promoting DNA resection and homologous recombination. Recruited to sites of double-strand breaks following DNA damage and specifically promotes double-strand break repair via homologous recombination. Two different, non-exclusive, mechanisms have been proposed. According to a report, regulates the choice of double-strand break repair by favoring homologous recombination over non-homologous end joining (NHEJ): acts by mediating ubiquitination of XRCC5/Ku80, leading to remove the Ku complex from DNA breaks, thereby promoting homologous recombination. According to another report, cooperates with UBE2Ds E2 ubiquitin ligases (UBE2D1, UBE2D2, UBE2D3 or UBE2D4) to promote homologous recombination by mediating ubiquitination of RBBP8/CtIP. Together with NLK, involved in the ubiquitination and degradation of TCF/LEF. Also exhibits auto-ubiquitination activity in combination with UBE2K. May act as a negative regulator in the Wnt/beta-catenin-mediated signaling pathway. In Bos taurus (Bovine), this protein is E3 ubiquitin-protein ligase RNF138 (RNF138).